The primary structure comprises 115 residues: Large ribosomal subunit protein bL20 (115 aa).

It belongs to the bacterial ribosomal protein bL20 family.

Binds directly to 23S ribosomal RNA and is necessary for the in vitro assembly process of the 50S ribosomal subunit. It is not involved in the protein synthesizing functions of that subunit. In Prochlorococcus marinus subsp. pastoris (strain CCMP1986 / NIES-2087 / MED4), this protein is Large ribosomal subunit protein bL20.